The sequence spans 87 residues: Omega-lycotoxin-Am1b (87 aa).

A signal peptide spans M1–C17. The propeptide occupies Q18–R40. Intrachain disulfides connect C44–C59, C51–C64, C58–C84, and C66–C82.

It belongs to the neurotoxin omega-lctx family. As to expression, expressed by the venom gland.

The protein localises to the secreted. In terms of biological role, modulates Cav2.1/CACNA1A voltage-gated calcium channels (P/Q-type currents) in rat cerebellar Purkinje cells and hippocampal CA1-CA3 neurons. At saturating concentrations (&gt;10 nM) decelerates activation kinetics and slightly increases peak amplitude without affecting deactivation kinetics. In vivo, does not cause death when intravenously injected into mice. In rat models, through its activity on Cav2.1/CACNA1A, has an ameliorative effect on memory defects provoked by hyperstimulation of N-methyl-D-aspartate receptors (NMDARs) in the hippocampus. The chain is Omega-lycotoxin-Am1b from Alopecosa marikovskyi (Wolf spider).